An 834-amino-acid chain; its full sequence is Sodium/hydrogen exchanger 3 (834 aa).

Positions 1-25 are cleaved as a signal peptide; the sequence is MWGLGARGPDRGLLLALALGGLARA. Residues 26–51 are Extracellular-facing; sequence GGVEVEPGGAHGESGGFQVVTFEWAH. The chain crosses the membrane as a helical span at residues 52–74; the sequence is VQDPYVIALWILVASLAKIGFHL. At 75–82 the chain is on the cytoplasmic side; sequence SHKVTSVV. A helical transmembrane segment spans residues 83-102; that stretch reads PESALLIVLGLVLGGIVWAA. Residues 103–111 lie on the Extracellular side of the membrane; it reads DHIASFTLT. The helical transmembrane segment at 112-129 threads the bilayer; it reads PTVFFFYLLPPIVLDAGY. The Cytoplasmic segment spans residues 130–132; it reads FMP. A helical transmembrane segment spans residues 133–168; it reads NRLFFGNLGTILLYAVVGTVWNAATTGLSLYGVFLS. Residues Gly-138, Gly-141, and Thr-142 each coordinate a 1,2-diacyl-sn-glycero-3-phospho-(1D-myo-inositol). The Extracellular segment spans residues 169–181; that stretch reads GLMGDLQIGLLDF. Residues 182–203 traverse the membrane as a helical segment; the sequence is LLFGSLMAAVDPVAVLAVFEEV. Topologically, residues 204–205 are cytoplasmic; the sequence is HV. The helical transmembrane segment at 206-237 threads the bilayer; the sequence is NEVLFIIVFGESLLNDAVTVVLYNVFESFVAL. Residues 238 to 244 lie on the Extracellular side of the membrane; the sequence is GGDNVTG. N-linked (GlcNAc...) asparagine glycosylation is present at Asn-241. The helical transmembrane segment at 245–279 threads the bilayer; it reads VDCVKGIVSFFVVSLGGTLVGVVFAFLLSLVTRFT. Over 280-281 the chain is Cytoplasmic; it reads KH. Residues 282–304 traverse the membrane as a helical segment; that stretch reads VRIIEPGFVFIISYLSYLTSEML. Over 305-306 the chain is Extracellular; that stretch reads SL. Residues 307-323 traverse the membrane as a helical segment; sequence SAILAITFCGICCQKYV. Residues 324-330 are Cytoplasmic-facing; the sequence is KANISEQ. Residues 331–359 traverse the membrane as a helical segment; sequence SATTVRYTMKMLASSAETIIFMFLGISAV. Residues 360-367 are Extracellular-facing; that stretch reads NPFIWTWN. Residues 368–389 traverse the membrane as a helical segment; the sequence is TAFVLLTLVFISVYRAIGVVLQ. Residues 390–402 lie on the Cytoplasmic side of the membrane; the sequence is TWLLNRYRMVQLE. Position 398 (Met-398) interacts with a 1,2-diacyl-sn-glycero-3-phospho-(1D-myo-inositol). Residues 403–426 form a helical membrane-spanning segment; sequence PIDQVVLSYGGLRGAVAFALVVLL. Residues 427 to 433 are Extracellular-facing; that stretch reads DGDKVKE. A helical membrane pass occupies residues 434–467; the sequence is KNLFVSTTIIVVFFTVIFQGLTIKPLVQWLKVKR. Over 468-834 the chain is Cytoplasmic; sequence SEHREPRLNE…PAALPESTHM (367 aa). Residues Gln-497, Ile-498, and His-500 each coordinate a 1,2-diacyl-sn-glycero-3-phospho-(1D-myo-inositol). 2 positions are modified to phosphoserine: Ser-555 and Ser-563. Residues 575–589 are interaction with EZR; that stretch reads RSSTVEASVSYLLRE. Positions 590 to 667 are interaction with NHERF4; the sequence is NVSAVCLDMQ…RKRLESFKST (78 aa). Residues 591–695 are interaction with AHCYL1; that stretch reads VSAVCLDMQS…AQKRRNSSIP (105 aa). Ser-592 and Ser-607 each carry phosphoserine. Phosphoserine; by SGK1 is present on Ser-663. A compositionally biased stretch (basic residues) spans 679-691; that stretch reads KLYKRERAQKRRN. Residues 679–728 form a disordered region; the sequence is KLYKRERAQKRRNSSIPNGKLPMESPAQNFTIKEKDLELSDTEEPPNYDE. Residues 717–728 show a composition bias toward acidic residues; it reads LSDTEEPPNYDE. Ser-718, Ser-810, and Ser-813 each carry phosphoserine. Residues 814–834 form a disordered region; that stretch reads FLQADGPEERPPAALPESTHM.

The protein belongs to the monovalent cation:proton antiporter 1 (CPA1) transporter (TC 2.A.36) family. As to quaternary structure, homodimer. Found in the forms of complex and dynamic macromolecular complexes. Binds NHERF1 and NHERF2. Interacts with CHP1; increases SLC9A3 trafficking and activity at the plasma membrane. Interacts with CHP2 and SHANK2. Interacts with PDZK1 (via C-terminal PDZ domain). Interacts with NHERF4 and interaction decrease in response to elevated calcium ion levels. Interacts with AHCYL1; the interaction is required for SLC9A3 activity. Interacts with SNX27 (via PDZ domains); directs SLC9A3 membrane insertion from early endosomes to the plasma membrane. Interacts with EZR; interaction targets SLC9A3 to the apical membrane. In terms of processing, phosphorylated by PKA, which inhibits activity. Phosphorylation at Ser-663 by SGK1 is associated with increased abundance at the cell membrane. Phosphorylation at Ser-718 by CSNK2A1 regulates SLC9A3 activity through the formation of multiple signaling complexes.

It localises to the apical cell membrane. Its subcellular location is the cell membrane. It is found in the recycling endosome membrane. The protein resides in the early endosome membrane. The enzyme catalyses Na(+)(in) + H(+)(out) = Na(+)(out) + H(+)(in). Its activity is regulated as follows. Seems to switch between active and inactive modes in response to various stimuli. Activated directly or indirectly by membrane phosphatidylinositol (PIs). Regulated by a variety of auxiliary proteins, which facilitate the maturation, cell surface expression and function of the transporter. Inhibited specifically by the drug tenapanor. Its function is as follows. Plasma membrane Na(+)/H(+) antiporter. Exchanges intracellular H(+) ions for extracellular Na(+) in 1:1 stoichiometry, playing a key role in salt and fluid absorption and pH homeostasis. Major apical Na(+)/H(+) exchanger in kidney and intestine playing an important role in renal and intestine Na(+) absorption and blood pressure regulation. The protein is Sodium/hydrogen exchanger 3 of Homo sapiens (Human).